Reading from the N-terminus, the 549-residue chain is Dihydroxy-acid dehydratase (549 aa).

D78 lines the Mg(2+) pocket. C119 is a binding site for [2Fe-2S] cluster. Mg(2+) is bound by residues D120 and K121. K121 is modified (N6-carboxylysine). C191 is a binding site for [2Fe-2S] cluster. Residue E441 participates in Mg(2+) binding. The active-site Proton acceptor is S466.

Belongs to the IlvD/Edd family. Homodimer. Requires [2Fe-2S] cluster as cofactor. Mg(2+) serves as cofactor.

It catalyses the reaction (2R)-2,3-dihydroxy-3-methylbutanoate = 3-methyl-2-oxobutanoate + H2O. The enzyme catalyses (2R,3R)-2,3-dihydroxy-3-methylpentanoate = (S)-3-methyl-2-oxopentanoate + H2O. It functions in the pathway amino-acid biosynthesis; L-isoleucine biosynthesis; L-isoleucine from 2-oxobutanoate: step 3/4. Its pathway is amino-acid biosynthesis; L-valine biosynthesis; L-valine from pyruvate: step 3/4. In terms of biological role, functions in the biosynthesis of branched-chain amino acids. Catalyzes the dehydration of (2R,3R)-2,3-dihydroxy-3-methylpentanoate (2,3-dihydroxy-3-methylvalerate) into 2-oxo-3-methylpentanoate (2-oxo-3-methylvalerate) and of (2R)-2,3-dihydroxy-3-methylbutanoate (2,3-dihydroxyisovalerate) into 2-oxo-3-methylbutanoate (2-oxoisovalerate), the penultimate precursor to L-isoleucine and L-valine, respectively. The chain is Dihydroxy-acid dehydratase from Methanothermobacter thermautotrophicus (strain ATCC 29096 / DSM 1053 / JCM 10044 / NBRC 100330 / Delta H) (Methanobacterium thermoautotrophicum).